The following is a 275-amino-acid chain: Thiazole synthase (275 aa).

The active-site Schiff-base intermediate with DXP is Lys116. Residues Gly177, 203 to 204 (AG), and 225 to 226 (NT) contribute to the 1-deoxy-D-xylulose 5-phosphate site.

This sequence belongs to the ThiG family. As to quaternary structure, homotetramer. Forms heterodimers with either ThiH or ThiS.

It localises to the cytoplasm. The catalysed reaction is [ThiS sulfur-carrier protein]-C-terminal-Gly-aminoethanethioate + 2-iminoacetate + 1-deoxy-D-xylulose 5-phosphate = [ThiS sulfur-carrier protein]-C-terminal Gly-Gly + 2-[(2R,5Z)-2-carboxy-4-methylthiazol-5(2H)-ylidene]ethyl phosphate + 2 H2O + H(+). It functions in the pathway cofactor biosynthesis; thiamine diphosphate biosynthesis. Functionally, catalyzes the rearrangement of 1-deoxy-D-xylulose 5-phosphate (DXP) to produce the thiazole phosphate moiety of thiamine. Sulfur is provided by the thiocarboxylate moiety of the carrier protein ThiS. In vitro, sulfur can be provided by H(2)S. This chain is Thiazole synthase, found in Acaryochloris marina (strain MBIC 11017).